Here is a 709-residue protein sequence, read N- to C-terminus: Ribosomal RNA large subunit methyltransferase K/L (709 aa).

A THUMP domain is found at 43-154 (LAYRITLWTR…NGVITIAMNF (112 aa)).

The protein belongs to the methyltransferase superfamily. RlmKL family.

The protein resides in the cytoplasm. It carries out the reaction guanosine(2445) in 23S rRNA + S-adenosyl-L-methionine = N(2)-methylguanosine(2445) in 23S rRNA + S-adenosyl-L-homocysteine + H(+). It catalyses the reaction guanosine(2069) in 23S rRNA + S-adenosyl-L-methionine = N(2)-methylguanosine(2069) in 23S rRNA + S-adenosyl-L-homocysteine + H(+). In terms of biological role, specifically methylates the guanine in position 2445 (m2G2445) and the guanine in position 2069 (m7G2069) of 23S rRNA. The sequence is that of Ribosomal RNA large subunit methyltransferase K/L from Shewanella sp. (strain W3-18-1).